We begin with the raw amino-acid sequence, 344 residues long: Fructose-1,6-bisphosphatase class 1 (344 aa).

The Mg(2+) site is built by glutamate 92, aspartate 115, leucine 117, and aspartate 118. Residues 118-121, asparagine 211, tyrosine 244, and lysine 274 each bind substrate; that span reads DGSS. Glutamate 280 serves as a coordination point for Mg(2+).

It belongs to the FBPase class 1 family. In terms of assembly, homotetramer. It depends on Mg(2+) as a cofactor.

It is found in the cytoplasm. The catalysed reaction is beta-D-fructose 1,6-bisphosphate + H2O = beta-D-fructose 6-phosphate + phosphate. Its pathway is carbohydrate biosynthesis; gluconeogenesis. The chain is Fructose-1,6-bisphosphatase class 1 from Aeromonas salmonicida (strain A449).